A 1116-amino-acid polypeptide reads, in one-letter code: Protein translocase subunit SecA (1116 aa).

Residues Gln-176, Gly-194–Thr-198, and Asp-693 each bind ATP.

This sequence belongs to the SecA family. As to quaternary structure, monomer and homodimer. Part of the essential Sec protein translocation apparatus which comprises SecA, SecYEG and auxiliary proteins SecDF. Other proteins may also be involved.

Its subcellular location is the cell inner membrane. The protein localises to the cytoplasm. It carries out the reaction ATP + H2O + cellular proteinSide 1 = ADP + phosphate + cellular proteinSide 2.. Functionally, part of the Sec protein translocase complex. Interacts with the SecYEG preprotein conducting channel. Has a central role in coupling the hydrolysis of ATP to the transfer of proteins into and across the cell membrane, serving as an ATP-driven molecular motor driving the stepwise translocation of polypeptide chains across the membrane. The polypeptide is Protein translocase subunit SecA (Amoebophilus asiaticus (strain 5a2)).